The primary structure comprises 648 residues: Forkhead box protein N1 (648 aa).

Positions 1–95 are disordered; sequence MVSLLPPQSD…PGPGSFRLSP (95 aa). Polar residues predominate over residues 38–50; the sequence is APQNKHANFSCSS. Residues 54–67 are compositionally biased toward pro residues; that stretch reads DGPPERTPSLPPHS. Residues 271–367 constitute a DNA-binding region (fork-head); that stretch reads KPIYSYSILI…EELQKWKRKD (97 aa). 3 disordered regions span residues 392–432, 457–521, and 629–648; these read LGSP…APGP, HLSP…TLLP, and SAAA…LALA. The segment covering 398–412 has biased composition (pro residues); that stretch reads GCPPPGLAGPGPIRP.

Bone marrow (at protein level). Expressed in thymus and skin.

The protein resides in the nucleus. Functionally, transcriptional regulator which regulates the development, differentiation, and function of thymic epithelial cells (TECs) both in the prenatal and postnatal thymus. Acts as a master regulator of the TECs lineage development and is required from the onset of differentiation in progenitor TECs in the developing fetus to the final differentiation steps through which TECs mature to acquire their full functionality. Regulates, either directly or indirectly the expression of a variety of genes that mediate diverse aspects of thymus development and function, including MHC Class II, DLL4, CCL25, CTSL, CD40 and PAX1. Regulates the differentiation of the immature TECs into functional cortical TECs (cTECs) and medullary TECs (mTECs). Essential for maintenance of mTECs population in the postnatal thymus. Involved in the morphogenesis and maintenance of the three-dimensional thymic microstructure which is necessary for a fully functional thymus. Plays an important role in the maintenance of hematopoiesis and particularly T lineage progenitors within the bone marrow niche with age. Essential for the vascularization of the thymus anlage. Promotes the terminal differentiation of epithelial cells in the epidermis and hair follicles, partly by negatively regulating the activity of protein kinase C. This chain is Forkhead box protein N1 (Foxn1), found in Mus musculus (Mouse).